The following is a 60-amino-acid chain: Large ribosomal subunit protein bL33 (60 aa).

Belongs to the bacterial ribosomal protein bL33 family.

The protein is Large ribosomal subunit protein bL33 of Flavobacterium psychrophilum (strain ATCC 49511 / DSM 21280 / CIP 103535 / JIP02/86).